The primary structure comprises 399 residues: Probable peptidoglycan glycosyltransferase FtsW (399 aa).

The Cytoplasmic portion of the chain corresponds to 1-32 (MMAGFAQTTITKINQFYERWMPRLPAEMTARN). A helical membrane pass occupies residues 33 to 53 (VLVFCVVCLLCIGSVMVASAS). Topologically, residues 54-72 (MPYAEYMHENPFHYVVRHA) are periplasmic. The helical transmembrane segment at 73–93 (ISIATAAIVAYLVYKVPLNVW) threads the bilayer. Residues 94-97 (FKNT) are Cytoplasmic-facing. The chain crosses the membrane as a helical span at residues 98–118 (FSFWLITILLLLAVLVIGTEV). Residues 119 to 126 (NGSRRWIR) are Periplasmic-facing. The chain crosses the membrane as a helical span at residues 127–147 (LAGFTLQPTEVAKVMMAIFTA). Residues 148 to 159 (DYVVRRAKEVRT) lie on the Cytoplasmic side of the membrane. The helical transmembrane segment at 160–180 (HWKGLVRLSGVMAITVGLIIA) threads the bilayer. At 181–183 (EPD) the chain is on the periplasmic side. Residues 184–204 (LGATVVIVLMMVGIFFLAGAP) traverse the membrane as a helical segment. The Cytoplasmic segment spans residues 205–207 (PTQ). Residues 208 to 228 (FAIMLGAVVMGIGFLILFEPY) form a helical membrane-spanning segment. Over 229–292 (RLARAMSFTN…DFMLAVLGEE (64 aa)) the chain is Periplasmic. The chain crosses the membrane as a helical span at residues 293-313 (FGFVGISIVIGLSFIMLACCI). The Cytoplasmic portion of the chain corresponds to 314–327 (KIGHRALKHNFLRA). A helical membrane pass occupies residues 328 to 348 (GYLAYGISIIFLLQIIVNAGM). Over 349–359 (NMGLMPTKGLT) the chain is Periplasmic. Residues 360-380 (LPFISYGGTSLMMCAAMISLI) traverse the membrane as a helical segment. At 381–399 (LRIDASTQEINPDREESNF) the chain is on the cytoplasmic side.

The protein belongs to the SEDS family. FtsW subfamily.

The protein localises to the cell inner membrane. It catalyses the reaction [GlcNAc-(1-&gt;4)-Mur2Ac(oyl-L-Ala-gamma-D-Glu-L-Lys-D-Ala-D-Ala)](n)-di-trans,octa-cis-undecaprenyl diphosphate + beta-D-GlcNAc-(1-&gt;4)-Mur2Ac(oyl-L-Ala-gamma-D-Glu-L-Lys-D-Ala-D-Ala)-di-trans,octa-cis-undecaprenyl diphosphate = [GlcNAc-(1-&gt;4)-Mur2Ac(oyl-L-Ala-gamma-D-Glu-L-Lys-D-Ala-D-Ala)](n+1)-di-trans,octa-cis-undecaprenyl diphosphate + di-trans,octa-cis-undecaprenyl diphosphate + H(+). The protein operates within cell wall biogenesis; peptidoglycan biosynthesis. Functionally, peptidoglycan polymerase that is essential for cell division. This Acinetobacter baylyi (strain ATCC 33305 / BD413 / ADP1) protein is Probable peptidoglycan glycosyltransferase FtsW.